The primary structure comprises 372 residues: Cytochrome b (372 aa).

The next 4 helical transmembrane spans lie at 25–45 (FGSM…FLAI), 69–90 (WMMQ…YIHI), 105–125 (WLSG…GYVL), and 170–190 (FFAL…IHIM). Heme b contacts are provided by His75 and His89. Heme b is bound by residues His174 and His188. His193 contributes to the a ubiquinone binding site. Transmembrane regions (helical) follow at residues 218-238 (HKDM…MSFT), 280-300 (LGGT…PFTH), 312-332 (LMQF…WAAT), and 339-358 (FTSI…TMNP).

Belongs to the cytochrome b family. In terms of assembly, the cytochrome bc1 complex contains 3 respiratory subunits (MT-CYB, CYC1 and UQCRFS1), 2 core proteins (UQCRC1 and UQCRC2) and probably 6 low-molecular weight proteins. The cofactor is heme b.

It localises to the mitochondrion inner membrane. Component of the ubiquinol-cytochrome c reductase complex (complex III or cytochrome b-c1 complex) that is part of the mitochondrial respiratory chain. The b-c1 complex mediates electron transfer from ubiquinol to cytochrome c. Contributes to the generation of a proton gradient across the mitochondrial membrane that is then used for ATP synthesis. The polypeptide is Cytochrome b (MT-CYB) (Pantherophis vulpinus (Western fox snake)).